A 352-amino-acid chain; its full sequence is MSAEEQRTTEEVPEWKRQEVAELVDLLETYDSVGVVNVTGIPSKQLQDMRRGLHGQAALRMSRNTLLVRALEEAGDGLDTLTEYVEGEVGLVATNDNPFGLYQQLENSKTPAPINAGEVAPNDIVVPEGDTGIDPGPFVGELQTIGANARIQEGSIQVLDDSVVTEEGETVSDDVSNVLSELGIEPKEVGLDLRGVFSEGVLFTPEELEIDVDEYRADIQSAAASARNLSVNAAYPTERTAPDLIAKGRGEAKSLGLQASVESPDLADDLVSKADAQVRALAAQIDDEDALPEELQDVDAPAAPAGGEADTTADEQSDETQASEADDADDSDDDDDDDDGNAGAEGLGEMFG.

Positions 286–297 (DDEDALPEELQD) are enriched in acidic residues. The disordered stretch occupies residues 286–352 (DDEDALPEEL…GAEGLGEMFG (67 aa)). The span at 299–310 (DAPAAPAGGEAD) shows a compositional bias: low complexity. Over residues 324-340 (EADDADDSDDDDDDDDG) the composition is skewed to acidic residues. Residues 343-352 (GAEGLGEMFG) are compositionally biased toward gly residues.

The protein belongs to the universal ribosomal protein uL10 family. In terms of assembly, part of the 50S ribosomal subunit. Forms part of the ribosomal stalk which helps the ribosome interact with GTP-bound translation factors. Forms a heptameric L10(L12)2(L12)2(L12)2 complex, where L10 forms an elongated spine to which the L12 dimers bind in a sequential fashion.

Its function is as follows. Forms part of the ribosomal stalk, playing a central role in the interaction of the ribosome with GTP-bound translation factors. The chain is Large ribosomal subunit protein uL10 from Halobacterium salinarum (strain ATCC 700922 / JCM 11081 / NRC-1) (Halobacterium halobium).